Here is an 807-residue protein sequence, read N- to C-terminus: Potassium transporter 9 (807 aa).

Over 1–59 (MAERVEASSVPEGENTIEEREVGAMWELEQKLDQPMDEEANKLNNMYREKGLSMLMLLR) the chain is Cytoplasmic. Residues 60–80 (LSFQSLGIVYGDLGTSPLYVF) form a helical membrane-spanning segment. Topologically, residues 81 to 96 (YNTFPDGIDDSEDVIG) are extracellular. A helical membrane pass occupies residues 97 to 117 (ALSLIIYSLLLIPLIKYVFIV). At 118–185 (CKANDNGQGG…EGKEWRKRAL (68 aa)) the chain is on the cytoplasmic side. The helical transmembrane segment at 186–206 (LVVVLLGTCMMIGDGILTPAI) threads the bilayer. Residues 207-225 (SVLSATGGIKVNNPKMSGD) lie on the Extracellular side of the membrane. A helical membrane pass occupies residues 226–246 (IVVLVAIVILIGLFSMQHYGT). The Cytoplasmic portion of the chain corresponds to 247–248 (DK). A helical transmembrane segment spans residues 249–269 (VGWLFAPIVLIWFLFIGATGM). Residues 270–299 (YNICKYDTSVLKAFSPTYIYLYFKRRGRDG) lie on the Extracellular side of the membrane. A helical transmembrane segment spans residues 300-320 (WISLGGILLSITGTEALYADI). Over 321 to 322 (AY) the chain is Cytoplasmic. A helical transmembrane segment spans residues 323–343 (FPLLAIQLAFTFFVFPCLLLA). The Extracellular segment spans residues 344–369 (YCGQAAYLVIHKEHYQDAFYASIPDS). Residues 370-390 (VYWPMFIVATGAAIVGSQATI) form a helical membrane-spanning segment. The Cytoplasmic segment spans residues 391–417 (SGTYSIVKQAVAHGCFPRVKIVHTSKK). A helical transmembrane segment spans residues 418-438 (FLGQIYCPDINWILMLGCIAV). Residues 439 to 454 (TASFKKQSQIGNAYGT) lie on the Extracellular side of the membrane. Residues 455-475 (AVVLVMLVTTLLMVLIMLLVW) traverse the membrane as a helical segment. The Cytoplasmic segment spans residues 476–481 (HCHWIL). The helical transmembrane segment at 482–502 (VLIFTFLSFFVELSYFSAVIF) threads the bilayer. Residues 503–507 (KIDEG) are Extracellular-facing. The helical transmembrane segment at 508-528 (GWVPLIIAAISLLVMSVWHYA) threads the bilayer. The Cytoplasmic portion of the chain corresponds to 529 to 807 (TVKKYEFEMH…LLNVGQVFYV (279 aa)).

It belongs to the HAK/KUP transporter (TC 2.A.72.3) family.

It is found in the cell membrane. Putative potassium transporter. The sequence is that of Potassium transporter 9 (POT9) from Arabidopsis thaliana (Mouse-ear cress).